Reading from the N-terminus, the 370-residue chain is F-box protein At1g66490 (370 aa).

An F-box domain is found at 1 to 46; the sequence is MRTISDLPVALVEEILSRVPLTSLSAVRSTCKTWNALSKTQIFGKT.

In Arabidopsis thaliana (Mouse-ear cress), this protein is F-box protein At1g66490.